We begin with the raw amino-acid sequence, 689 residues long: Glycine--tRNA ligase beta subunit (689 aa).

It belongs to the class-II aminoacyl-tRNA synthetase family. Tetramer of two alpha and two beta subunits.

The protein localises to the cytoplasm. It catalyses the reaction tRNA(Gly) + glycine + ATP = glycyl-tRNA(Gly) + AMP + diphosphate. The polypeptide is Glycine--tRNA ligase beta subunit (Shewanella amazonensis (strain ATCC BAA-1098 / SB2B)).